The chain runs to 263 residues: Proteasome subunit beta type-5 (263 aa).

A propeptide spans M1–G59 (removed in mature form). Residue T60 is the Nucleophile of the active site. Bortezomib is bound at residue A108.

This sequence belongs to the peptidase T1B family. The 26S proteasome consists of a 20S proteasome core and two 19S regulatory subunits. The 20S proteasome core is a barrel-shaped complex made of 28 subunits that are arranged in four stacked rings. The two outer rings are each formed by seven alpha subunits, and the two inner rings are formed by seven beta subunits. The proteolytic activity is exerted by three beta-subunits PSMB5, PSMB6 and PSMB7. Directly interacts with POMP. Interacts with ABCB1 and TAP1. In terms of assembly, (Microbial infection) Interacts with HIV-1 TAT protein.

The protein resides in the cytoplasm. It localises to the nucleus. The enzyme catalyses Cleavage of peptide bonds with very broad specificity.. In terms of biological role, component of the 20S core proteasome complex involved in the proteolytic degradation of most intracellular proteins. This complex plays numerous essential roles within the cell by associating with different regulatory particles. Associated with two 19S regulatory particles, forms the 26S proteasome and thus participates in the ATP-dependent degradation of ubiquitinated proteins. The 26S proteasome plays a key role in the maintenance of protein homeostasis by removing misfolded or damaged proteins that could impair cellular functions, and by removing proteins whose functions are no longer required. Associated with the PA200 or PA28, the 20S proteasome mediates ubiquitin-independent protein degradation. This type of proteolysis is required in several pathways including spermatogenesis (20S-PA200 complex) or generation of a subset of MHC class I-presented antigenic peptides (20S-PA28 complex). Within the 20S core complex, PSMB5 displays a chymotrypsin-like activity. This chain is Proteasome subunit beta type-5, found in Homo sapiens (Human).